The chain runs to 134 residues: Retinoid-binding protein 7 (134 aa).

The protein belongs to the calycin superfamily. Fatty-acid binding protein (FABP) family. In terms of tissue distribution, expressed primarily in kidney, heart and transverse colon. Detected in adult lymph node, appendix, ascending colon, and in fetal heart and spleen.

It is found in the cytoplasm. In terms of biological role, intracellular transport of retinol. This Homo sapiens (Human) protein is Retinoid-binding protein 7 (RBP7).